The chain runs to 310 residues: Deoxypodophyllotoxin synthase (310 aa).

Residues S159–P258 enclose the Fe2OG dioxygenase domain. Residues H184, D186, and H239 each coordinate Fe cation. Residue R249 coordinates 2-oxoglutarate.

Belongs to the iron/ascorbate-dependent oxidoreductase family. The cofactor is Fe(2+). Mostly expressed in leaves and stems.

It catalyses the reaction (-)-yatein + 2-oxoglutarate + O2 = (-)-deoxypodophyllotoxin + succinate + CO2 + H2O. It participates in aromatic compound metabolism; phenylpropanoid biosynthesis. Its function is as follows. 2-oxoglutarate-dependent dioxygenase involved in the biosynthesis of etoposide, a chemotherapeutic compound of the topoisomerase inhibitor family. Catalyzes the conversion of yatein to deoxypodophyllotoxin. Can also use, to some extent, demethylyatein as substrate. The sequence is that of Deoxypodophyllotoxin synthase from Sinopodophyllum hexandrum (Himalayan may apple).